Here is an 83-residue protein sequence, read N- to C-terminus: Cytochrome b559 subunit alpha (83 aa).

A helical membrane pass occupies residues 22-36 (VIHSITIPALFIAGW). Residue His-24 coordinates heme.

Belongs to the PsbE/PsbF family. As to quaternary structure, heterodimer of an alpha subunit and a beta subunit. PSII is composed of 1 copy each of membrane proteins PsbA, PsbB, PsbC, PsbD, PsbE, PsbF, PsbH, PsbI, PsbJ, PsbK, PsbL, PsbM, PsbT, PsbX, PsbY, PsbZ, Psb30/Ycf12, peripheral proteins PsbO, CyanoQ (PsbQ), PsbU, PsbV and a large number of cofactors. It forms dimeric complexes. Requires heme b as cofactor.

Its subcellular location is the cellular thylakoid membrane. This b-type cytochrome is tightly associated with the reaction center of photosystem II (PSII). PSII is a light-driven water:plastoquinone oxidoreductase that uses light energy to abstract electrons from H(2)O, generating O(2) and a proton gradient subsequently used for ATP formation. It consists of a core antenna complex that captures photons, and an electron transfer chain that converts photonic excitation into a charge separation. The sequence is that of Cytochrome b559 subunit alpha from Synechococcus elongatus (strain ATCC 33912 / PCC 7942 / FACHB-805) (Anacystis nidulans R2).